The following is a 914-amino-acid chain: Protein translocase subunit SecA (914 aa).

ATP contacts are provided by residues Gln-87, 105–109 (GEGKT), and Asp-508. Zn(2+) contacts are provided by Cys-898, Cys-900, Cys-909, and His-910.

The protein belongs to the SecA family. As to quaternary structure, monomer and homodimer. Part of the essential Sec protein translocation apparatus which comprises SecA, SecYEG and auxiliary proteins SecDF-YajC and YidC. Zn(2+) serves as cofactor.

The protein localises to the cell inner membrane. It localises to the cytoplasm. It catalyses the reaction ATP + H2O + cellular proteinSide 1 = ADP + phosphate + cellular proteinSide 2.. In terms of biological role, part of the Sec protein translocase complex. Interacts with the SecYEG preprotein conducting channel. Has a central role in coupling the hydrolysis of ATP to the transfer of proteins into and across the cell membrane, serving both as a receptor for the preprotein-SecB complex and as an ATP-driven molecular motor driving the stepwise translocation of polypeptide chains across the membrane. This Xylella fastidiosa (strain M12) protein is Protein translocase subunit SecA.